The following is a 140-amino-acid chain: Calcium-binding protein B (140 aa).

2 EF-hand domains span residues 38–73 (ATLS…INQP) and 74–109 (KTYL…KTSS). Positions 51, 53, 55, 57, and 62 each coordinate Ca(2+).

This Dictyostelium discoideum (Social amoeba) protein is Calcium-binding protein B (cbpB).